Here is a 143-residue protein sequence, read N- to C-terminus: Photosystem I reaction center subunit IV B, chloroplastic (143 aa).

Residues 1–51 (MASSSMASAASGFMVATPNIATSNTAPRTSMLFFSSSKNNTTTNFPRLVVR) constitute a chloroplast transit peptide. Low complexity predominate over residues 56 to 75 (AAPPAATATAEGEAPPAKAA). The tract at residues 56-86 (AAPPAATATAEGEAPPAKAAKPPPIGPKRGT) is disordered.

The protein belongs to the PsaE family. In terms of processing, 2 isoforms exists (ratio 1:1). With or without the N-terminal alanine.

The protein resides in the plastid. The protein localises to the chloroplast thylakoid membrane. Its function is as follows. Stabilizes the interaction between PsaC and the PSI core, assists the docking of the ferredoxin to PSI and interacts with ferredoxin-NADP oxidoreductase. This is Photosystem I reaction center subunit IV B, chloroplastic (PSAEB) from Nicotiana sylvestris (Wood tobacco).